The sequence spans 496 residues: 2,3-bisphosphoglycerate-independent phosphoglycerate mutase (496 aa).

Asp-12 and Ser-62 together coordinate Mn(2+). Ser-62 functions as the Phosphoserine intermediate in the catalytic mechanism. Substrate-binding positions include His-121, 150 to 151 (RD), Arg-181, Arg-187, 252 to 255 (RNDR), and Lys-317. Asp-384, His-388, Asp-425, His-426, and His-444 together coordinate Mn(2+).

It belongs to the BPG-independent phosphoglycerate mutase family. As to quaternary structure, monomer. Requires Mn(2+) as cofactor.

It carries out the reaction (2R)-2-phosphoglycerate = (2R)-3-phosphoglycerate. It participates in carbohydrate degradation; glycolysis; pyruvate from D-glyceraldehyde 3-phosphate: step 3/5. Its function is as follows. Catalyzes the interconversion of 2-phosphoglycerate and 3-phosphoglycerate. The sequence is that of 2,3-bisphosphoglycerate-independent phosphoglycerate mutase from Anaplasma phagocytophilum (strain HZ).